A 134-amino-acid polypeptide reads, in one-letter code: Small ribosomal subunit protein uS8c (134 aa).

This sequence belongs to the universal ribosomal protein uS8 family. Part of the 30S ribosomal subunit.

The protein resides in the plastid. Its subcellular location is the chloroplast. Its function is as follows. One of the primary rRNA binding proteins, it binds directly to 16S rRNA central domain where it helps coordinate assembly of the platform of the 30S subunit. The polypeptide is Small ribosomal subunit protein uS8c (rps8) (Bigelowiella natans (Pedinomonas minutissima)).